Consider the following 280-residue polypeptide: UPF0276 protein CC_3255 (280 aa).

It belongs to the UPF0276 family.

This is UPF0276 protein CC_3255 from Caulobacter vibrioides (strain ATCC 19089 / CIP 103742 / CB 15) (Caulobacter crescentus).